Consider the following 332-residue polypeptide: GTP 3',8-cyclase (332 aa).

The Radical SAM core domain maps to 9–220 (GYNRRVDYLR…TQVRERIAER (212 aa)). Arginine 18 is a binding site for GTP. Residues cysteine 25 and cysteine 29 each contribute to the [4Fe-4S] cluster site. S-adenosyl-L-methionine is bound at residue tyrosine 31. Cysteine 32 contributes to the [4Fe-4S] cluster binding site. Arginine 67 is a GTP binding site. S-adenosyl-L-methionine is bound at residue glycine 71. GTP is bound at residue threonine 98. Serine 122 provides a ligand contact to S-adenosyl-L-methionine. Lysine 159 is a GTP binding site. An S-adenosyl-L-methionine-binding site is contributed by methionine 193. Positions 258 and 261 each coordinate [4Fe-4S] cluster. Residue 263–265 (RVR) coordinates GTP. Cysteine 275 contacts [4Fe-4S] cluster.

The protein belongs to the radical SAM superfamily. MoaA family. As to quaternary structure, monomer and homodimer. [4Fe-4S] cluster serves as cofactor.

The enzyme catalyses GTP + AH2 + S-adenosyl-L-methionine = (8S)-3',8-cyclo-7,8-dihydroguanosine 5'-triphosphate + 5'-deoxyadenosine + L-methionine + A + H(+). The protein operates within cofactor biosynthesis; molybdopterin biosynthesis. Functionally, catalyzes the cyclization of GTP to (8S)-3',8-cyclo-7,8-dihydroguanosine 5'-triphosphate. The polypeptide is GTP 3',8-cyclase (Pseudomonas fluorescens (strain Pf0-1)).